The following is a 499-amino-acid chain: Maturase K (499 aa).

This sequence belongs to the intron maturase 2 family. MatK subfamily.

The protein localises to the plastid. Its subcellular location is the chloroplast. In terms of biological role, usually encoded in the trnK tRNA gene intron. Probably assists in splicing its own and other chloroplast group II introns. The chain is Maturase K from Gymnocladus dioicus (Kentucky coffee tree).